A 34-amino-acid polypeptide reads, in one-letter code: Small ribosomal subunit protein uS2c (34 aa).

This sequence belongs to the universal ribosomal protein uS2 family.

The protein resides in the plastid. The protein localises to the chloroplast. The sequence is that of Small ribosomal subunit protein uS2c (rps2) from Ochrosphaera neapolitana.